Consider the following 378-residue polypeptide: MEIKQINSTIKSRAAVAFAPNQPLQIVEIDVEMPRKGEVLIRNTHTGVCHTDAFTLSGSDPEGVFPVVLGHEGAGVVVAVGEGVLSVKPGDHVIPLYTAECGECEFCRSGKTNLCVSVRDTQGKGLMPDCTTRFSYQGQPIYHYMGCSTFSEYSVVAEVSLAKINPEANHEQVCLLGCGVTTGIGAVHNTAKVQEGDSVAVFGLGAIGLAVVQGARQAKAGRIIAIDTNPAKFELAKQFGATDCLNPNDYDKPIKDVLLDINKWGIDHTFECIGNVNVMRQALESAHRGWGQSIIIGVAGAGQEISTRPFQLVTGRVWKGSAFGGVKGRSELPQMVEDSMKGDIQLEPFVTHTMPLDKINEAFELMHEGKSIRTVIHY.

Zn(2+) is bound by residues C49, H71, C101, C104, C107, C115, and C178.

Belongs to the zinc-containing alcohol dehydrogenase family. Class-III subfamily. Homodimer. It depends on Zn(2+) as a cofactor.

Its subcellular location is the cytoplasm. The catalysed reaction is S-(hydroxymethyl)glutathione + NADP(+) = S-formylglutathione + NADPH + H(+). It catalyses the reaction S-(hydroxymethyl)glutathione + NAD(+) = S-formylglutathione + NADH + H(+). The enzyme catalyses a primary alcohol + NAD(+) = an aldehyde + NADH + H(+). It carries out the reaction a secondary alcohol + NAD(+) = a ketone + NADH + H(+). The catalysed reaction is S-nitrosoglutathione + NADH + H(+) = S-(hydroxysulfenamide)glutathione + NAD(+). Has high formaldehyde dehydrogenase activity in the presence of glutathione and catalyzes the oxidation of normal alcohols in a reaction that is not GSH-dependent. In addition, hemithiolacetals other than those formed from GSH, including omega-thiol fatty acids, also are substrates. Also acts as a S-nitroso-glutathione reductase by catalyzing the NADH-dependent reduction of S-nitrosoglutathione. This Haemophilus influenzae (strain ATCC 51907 / DSM 11121 / KW20 / Rd) protein is S-(hydroxymethyl)glutathione dehydrogenase (frmA).